A 229-amino-acid chain; its full sequence is Aminodeoxyfutalosine nucleosidase (229 aa).

Residue Glu13 is the Proton acceptor of the active site. Substrate-binding positions include Gly79, Ile153, and 173–174 (ME). Asp197 serves as the catalytic Proton donor.

The protein belongs to the PNP/UDP phosphorylase family. Homodimer.

The enzyme catalyses 6-amino-6-deoxyfutalosine + H2O = dehypoxanthine futalosine + adenine. The catalysed reaction is S-adenosyl-L-homocysteine + H2O = S-(5-deoxy-D-ribos-5-yl)-L-homocysteine + adenine. It carries out the reaction S-methyl-5'-thioadenosine + H2O = 5-(methylsulfanyl)-D-ribose + adenine. It catalyses the reaction 5'-deoxyadenosine + H2O = 5-deoxy-D-ribose + adenine. Its pathway is quinol/quinone metabolism; menaquinone biosynthesis. The protein operates within amino-acid biosynthesis; L-methionine biosynthesis via salvage pathway; S-methyl-5-thio-alpha-D-ribose 1-phosphate from S-methyl-5'-thioadenosine (hydrolase route): step 1/2. Functionally, catalyzes the direct conversion of aminodeoxyfutalosine (AFL) into dehypoxanthine futalosine (DHFL) and adenine via the hydrolysis of the N-glycosidic bond; this reaction seems to represent an essential step in the menaquinone biosynthesis pathway in Campylobacter species. Also catalyzes the hydrolysis of 5'-methylthioadenosine (MTA) to adenine and 5'-methylthioribose. Can also probably use S-adenosylhomocysteine (SAH) as substrate, leading to adenine and S-ribosylhomocysteine. These other activities highlight the tremendous versatility of the enzyme, which also plays key roles in S-adenosylmethionine recycling and in the biosynthesis of the quorum-sensing molecule autoinducer-2. Shows negligible activity with futalosine (FL) as substrate. The chain is Aminodeoxyfutalosine nucleosidase (pfs) from Campylobacter jejuni subsp. jejuni serotype O:2 (strain ATCC 700819 / NCTC 11168).